A 1756-amino-acid chain; its full sequence is MIKVLGLLLGPLSSWVEVSGPIIIFGLYYGFLATLPFGPSKIYSTRSFLLGKPGYGIIAISGSITGQLIGFLSMYYSPIYAALWKPYAITLLVVPYMFFRFFQIMDKPSSSESPHLMNSINNPKALSLFMDGLILQLLNPILLANPVLTRLVNLFLFRYSPNISFMISGLCGWLGGHILLTIFIKWVSFRIDRNSLIDNTLLRRYINRTFSLLILCYCSFYLGRAPLPFLKGKNYEDNNGRSVTMARDDRSVAMARKNRSVAIDPQKLQELIKEEKFFRQQPWPIMCFDHNRVYQPIRYIGNSPFTRLGPVRTEVSQYFFGAYSSDGKKRISFTFLPSVLVLGEKLVGGYRDFLYTSCSSEDPYYRWNHTVKRKRDSLGNEFSDRVKALSHGSPAENVIERRVKFSNSNGDSFTEMYDPFLNGAFRGTINQFESPQMLNDSIISNLSDFIEIFMRDPKEGFPNDPLGYGYHISYLWQELEHESFPLPWEPLPTYTVRSLVPVTISSNPGTPQPKYALNRLKMKKISYLIQTPEIQPPYWLWIAWRSSIIHVPVQVARCYGDIYTNFLVYVYGRFDRLIKPSASGIIRMDAISCLFKKEYLFVYENLCFLFECLAQYEWTILLISRAGIPRDKRYSMEKKDFISLYREILLNEPLQIREIRKHVPRWSSGLMIGEYDDVDPVLLSSNRILSRKVKDTMTFDIGQRRIGVVQNRYSAEADYRRNLIQGSIRAKRRKIMIWKRIQPNVHSLFFLKRKEIPAYPKDYYDTSDSGRVDKEQIGEEVREKIQRVEDPLSQQTIAESLCLTWPELHYFRGLLLMAQSNIRKNIILPSLIIAKNMGRILLFQVPEFYKDWEEMRREMHVICASDGTELSETTFPDKWETQGMQIKLLFPFRLKPWHRSKPQSAKRLRWSYLTTFGLETDIPFGDPTSNLGIFSKFLKPIFKKVKRRLMGSTGIRRVPRVGYIDKSELNDRIQNKLLSETTPMGSANDSSEVNDQFGYETQTINVKDQDDWTTTMKERIESIAIINSSPITGMSLVDSEIHTGSKGSFNILGSTLKKRLVQIRRIPGLFRNKSVQLIRKRFYSIKFFIKRMDRRMDRDLLPSFINFIASNIKFWIQSAWIRSTRNITTIYGRIFIINKDISRINRGKITNYYSINEKIQDFEIRPDRNMFSMSQAYIFHKIWQIRALDIQRILDHEKPQDLKENDWKQWLRCFDRYNLSPQIWSRINPNKCRNIVNKQCTCYEERFVPYEQQEDSIFATVMEPFLGLLRKMNKRYRYDLLSYSYLNSTKDLDILNLTDIPGPPVQPAIPDERDITDREGILKEKFINDIIEEDWKGTDFNIVNGSRSTVDIYDAIRSCDYDHTTSIDRQKKKTDLITNQQGIDETRRENVGIMDSPKIEKRISQLDLNFWLFPELSGIKNIYYETKSKFIPGNSLLREERERKKIEEEERKETTNVLEQIIGIRSNVKNKQVEDGQDKNGQVEDQDGQDQDGQVEDQQTDGKKKTNKGLFQCKVVDVLGKKRFFYLANICRVMSGMKDPGTYLRIQERNIDLSLMAFCIAIQKNSSANKISKELALQRNVRGKVRNDNEIREDKKIMVFQPYRLSSIVDDQFLMYKIVSISLKLKKRAGEWIDGDFYDGSVQRGKILGDEKNIFSSLNLEDILLPKRRREFRILNRFDLENDHVGFSNGKDIQNDEELMGRDQHLSVDTTQIIKRFLWPSYRLEDIICMNRYWFNTNDGSRSAMLRIRMYPLTVN.

6 helical membrane-spanning segments follow: residues 18–38 (VSGP…LPFG), 54–74 (GYGI…FLSM), 79–99 (IYAA…YMFF), 128–148 (LFMD…NPVL), 163–183 (ISFM…LTIF), and 210–230 (FSLL…LPFL). The interval 1469–1504 (KNKQVEDGQDKNGQVEDQDGQDQDGQVEDQQTDGKK) is disordered. Positions 1471-1482 (KQVEDGQDKNGQ) are enriched in basic and acidic residues. The span at 1484–1499 (EDQDGQDQDGQVEDQQ) shows a compositional bias: acidic residues.

This sequence belongs to the TIC214 family. As to quaternary structure, part of the Tic complex.

The protein resides in the plastid. The protein localises to the chloroplast inner membrane. Functionally, involved in protein precursor import into chloroplasts. May be part of an intermediate translocation complex acting as a protein-conducting channel at the inner envelope. This Pinus thunbergii (Japanese black pine) protein is Protein TIC 214.